The following is a 297-amino-acid chain: Putative thiosulfate sulfurtransferase SseA (297 aa).

Rhodanese domains follow at residues 31-138 and 168-286; these read GAPG…ETTL and ILGA…VPIV. Cys245 serves as the catalytic Cysteine persulfide intermediate. Position 250 (Arg250) interacts with substrate.

The catalysed reaction is thiosulfate + hydrogen cyanide = thiocyanate + sulfite + 2 H(+). This chain is Putative thiosulfate sulfurtransferase SseA (sseA), found in Mycobacterium tuberculosis (strain CDC 1551 / Oshkosh).